Consider the following 697-residue polypeptide: Testis-specific gene 10 protein (697 aa).

The interaction with HIF1A stretch occupies residues 556 to 688 (QMTNERISMQ…SPDRGLDRSL (133 aa)). The tract at residues 656–684 (NAYNLGPMKPNTKCHSPERAHHRSPDRGL) is disordered. Residues 670-684 (HSPERAHHRSPDRGL) are compositionally biased toward basic and acidic residues. S687 carries the phosphoserine modification.

Belongs to the CEP135/TSGA10 family. Interacts with HIF1A. Processed into N-terminal 27-kDa and C-terminal 55-kDa fragments. Predominantly expressed in testis, in spermatozoa (at protein level). Not detected in Leydig cells. The N-terminal 27-kDa fragment is also detected in liver, while the C-terminal 55-kDa fragment is also found retina, brain and kidney (at protein level).

The protein resides in the cytoplasm. It is found in the cytoskeleton. It localises to the microtubule organizing center. The protein localises to the centrosome. Its subcellular location is the centriole. Functionally, plays a role in spermatogenesis. When overexpressed, prevents nuclear localization of HIF1A. This chain is Testis-specific gene 10 protein (Tsga10), found in Mus musculus (Mouse).